The primary structure comprises 1025 residues: Retrovirus-related Pol polyprotein from type-1 retrotransposable element R2 (1025 aa).

Residues 1–11 (NQIKKSNTSTG) show a composition bias toward polar residues. Residues 1–38 (NQIKKSNTSTGARIPKAMTNPADNFAGGQWKPPGRRSA) are disordered. The C2H2-type zinc-finger motif lies at 46 to 69 (FVCEHCLRAFTTNTGRGLHIKRAH). A compositionally biased stretch (basic and acidic residues) spans 146-158 (NRARETELTRLET). The disordered stretch occupies residues 146–172 (NRARETELTRLETADEDPASQEQDNPN). The 278-residue stretch at 358–635 (MIMYHGQCPR…DQWKYLGVVY (278 aa)) folds into the Reverse transcriptase domain. A nucleic acid-binding endonuclease region spans residues 755 to 1025 (SLLGGDWVAE…YRTERRRTAN (271 aa)).

It carries out the reaction DNA(n) + a 2'-deoxyribonucleoside 5'-triphosphate = DNA(n+1) + diphosphate. In Nasonia vitripennis (Parasitic wasp), this protein is Retrovirus-related Pol polyprotein from type-1 retrotransposable element R2.